A 179-amino-acid chain; its full sequence is Translationally-controlled tumor protein homolog (179 aa).

One can recognise a TCTP domain in the interval 1 to 179 (MIIYKDIISG…WKHGLEEMKV (179 aa)).

This sequence belongs to the TCTP family.

It localises to the cytoplasm. The protein localises to the cytoskeleton. In terms of biological role, involved in protein synthesis. Involved in microtubule stabilization. Involved in osmoadaptation. This chain is Translationally-controlled tumor protein homolog, found in Emericella nidulans (strain FGSC A4 / ATCC 38163 / CBS 112.46 / NRRL 194 / M139) (Aspergillus nidulans).